A 298-amino-acid polypeptide reads, in one-letter code: HTH-type transcriptional regulator ArgP (298 aa).

The HTH lysR-type domain occupies 4-60 (LDYKWIEALDAVVYQGSFERAAEHLFVSQSAISQRIKQLEKFLAQPVLIREQPPKPT). Positions 21 to 40 (FERAAEHLFVSQSAISQRIK) form a DNA-binding region, H-T-H motif.

The protein belongs to the LysR transcriptional regulatory family. In terms of assembly, homodimer.

In terms of biological role, controls the transcription of genes involved in arginine and lysine metabolism. This Vibrio parahaemolyticus serotype O3:K6 (strain RIMD 2210633) protein is HTH-type transcriptional regulator ArgP.